The primary structure comprises 143 residues: uncharacterized protein (143 aa).

The interval 111–143 (VTQDISHTSGKSPTPKAKSSSPKKSKKKNWIPL) is disordered. Residues 119-130 (SGKSPTPKAKSS) show a composition bias toward low complexity. Positions 131 to 143 (SPKKSKKKNWIPL) are enriched in basic residues.

This sequence belongs to the chlamydial CPn_0742/CT_635/TC_0003 family.

This is an uncharacterized protein from Chlamydia muridarum (strain MoPn / Nigg).